A 227-amino-acid chain; its full sequence is Cytochrome c oxidase subunit 2 (227 aa).

Topologically, residues 1 to 14 (MAYPFQLGLQDATS) are mitochondrial intermembrane. The chain crosses the membrane as a helical span at residues 15–45 (PIMEELLHFHDHTLMIVFLISSLVLYIITLM). The Mitochondrial matrix portion of the chain corresponds to 46–59 (LTTKLTHTSTMDAQ). The helical transmembrane segment at 60 to 87 (EVETVWTILPAIILILIALPSLRILYMM) threads the bilayer. Over 88–227 (DEINNPSLTV…YFETWSALMV (140 aa)) the chain is Mitochondrial intermembrane. 6 residues coordinate Cu cation: His161, Cys196, Glu198, Cys200, His204, and Met207. Glu198 provides a ligand contact to Mg(2+). Tyr218 carries the post-translational modification Phosphotyrosine.

It belongs to the cytochrome c oxidase subunit 2 family. In terms of assembly, component of the cytochrome c oxidase (complex IV, CIV), a multisubunit enzyme composed of 14 subunits. The complex is composed of a catalytic core of 3 subunits MT-CO1, MT-CO2 and MT-CO3, encoded in the mitochondrial DNA, and 11 supernumerary subunits COX4I, COX5A, COX5B, COX6A, COX6B, COX6C, COX7A, COX7B, COX7C, COX8 and NDUFA4, which are encoded in the nuclear genome. The complex exists as a monomer or a dimer and forms supercomplexes (SCs) in the inner mitochondrial membrane with NADH-ubiquinone oxidoreductase (complex I, CI) and ubiquinol-cytochrome c oxidoreductase (cytochrome b-c1 complex, complex III, CIII), resulting in different assemblies (supercomplex SCI(1)III(2)IV(1) and megacomplex MCI(2)III(2)IV(2)). Found in a complex with TMEM177, COA6, COX18, COX20, SCO1 and SCO2. Interacts with TMEM177 in a COX20-dependent manner. Interacts with COX20. Interacts with COX16. Cu cation is required as a cofactor.

It is found in the mitochondrion inner membrane. The enzyme catalyses 4 Fe(II)-[cytochrome c] + O2 + 8 H(+)(in) = 4 Fe(III)-[cytochrome c] + 2 H2O + 4 H(+)(out). Its function is as follows. Component of the cytochrome c oxidase, the last enzyme in the mitochondrial electron transport chain which drives oxidative phosphorylation. The respiratory chain contains 3 multisubunit complexes succinate dehydrogenase (complex II, CII), ubiquinol-cytochrome c oxidoreductase (cytochrome b-c1 complex, complex III, CIII) and cytochrome c oxidase (complex IV, CIV), that cooperate to transfer electrons derived from NADH and succinate to molecular oxygen, creating an electrochemical gradient over the inner membrane that drives transmembrane transport and the ATP synthase. Cytochrome c oxidase is the component of the respiratory chain that catalyzes the reduction of oxygen to water. Electrons originating from reduced cytochrome c in the intermembrane space (IMS) are transferred via the dinuclear copper A center (CU(A)) of subunit 2 and heme A of subunit 1 to the active site in subunit 1, a binuclear center (BNC) formed by heme A3 and copper B (CU(B)). The BNC reduces molecular oxygen to 2 water molecules using 4 electrons from cytochrome c in the IMS and 4 protons from the mitochondrial matrix. The protein is Cytochrome c oxidase subunit 2 (MT-CO2) of Vulpes macrotis (Kit fox).